The chain runs to 544 residues: Dynein intermediate chain 1 (544 aa).

WD repeat units follow at residues 241 to 281 (KARS…YPVS), 289 to 330 (GHLE…RPSE), 342 to 387 (SQCI…QPSN), 402 to 441 (VMTS…NQHE), 461 to 501 (THKA…EAPV), and 506 to 544 (PDGK…NLAN).

The protein belongs to the dynein intermediate chain family.

The protein resides in the cytoplasm. Functionally, has a role in meiotic nuclear divsion where it promotes the movement of 'horsetails'. The sequence is that of Dynein intermediate chain 1 (dic1) from Schizosaccharomyces pombe (strain 972 / ATCC 24843) (Fission yeast).